Reading from the N-terminus, the 190-residue chain is Glutathione peroxidase 2 (190 aa).

The active site involves Sec40. Position 40 (Sec40) is a non-standard amino acid, selenocysteine.

The protein belongs to the glutathione peroxidase family. Homotetramer.

Its subcellular location is the cytoplasm. The protein resides in the cytosol. It catalyses the reaction 2 glutathione + H2O2 = glutathione disulfide + 2 H2O. The enzyme catalyses a hydroperoxy polyunsaturated fatty acid + 2 glutathione = a hydroxy polyunsaturated fatty acid + glutathione disulfide + H2O. The catalysed reaction is tert-butyl hydroperoxide + 2 glutathione = tert-butanol + glutathione disulfide + H2O. It carries out the reaction cumene hydroperoxide + 2 glutathione = 2-phenylpropan-2-ol + glutathione disulfide + H2O. It catalyses the reaction (13S)-hydroperoxy-(9Z,11E)-octadecadienoate + 2 glutathione = (13S)-hydroxy-(9Z,11E)-octadecadienoate + glutathione disulfide + H2O. The enzyme catalyses (5S)-hydroperoxy-(6E,8Z,11Z,14Z)-eicosatetraenoate + 2 glutathione = (5S)-hydroxy-(6E,8Z,11Z,14Z)-eicosatetraenoate + glutathione disulfide + H2O. The catalysed reaction is (12R)-hydroperoxy-(5Z,8Z,10E,14Z)-eicosatetraenoate + 2 glutathione = (12R)-hydroxy-(5Z,8Z,10E,14Z)-eicosatetraenoate + glutathione disulfide + H2O. It carries out the reaction (15S)-hydroperoxy-(5Z,8Z,11Z,13E)-eicosatetraenoate + 2 glutathione = (15S)-hydroxy-(5Z,8Z,11Z,13E)-eicosatetraenoate + glutathione disulfide + H2O. Catalyzes the reduction of hydroperoxides in a glutathione-dependent manner thus regulating cellular redox homeostasis. Can reduce small soluble hydroperoxides such as H2O2, cumene hydroperoxide and tert-butyl hydroperoxide, as well as several fatty acid-derived hydroperoxides. Cannot reduce phosphatidycholine hydroperoxide. In Mus musculus (Mouse), this protein is Glutathione peroxidase 2 (Gpx2).